A 34-amino-acid chain; its full sequence is IRCQGSNQCYGHCREKTGCMNGKCINRVCKCYGC.

Cystine bridges form between Cys-3/Cys-24, Cys-9/Cys-29, Cys-13/Cys-31, and Cys-19/Cys-34.

It belongs to the short scorpion toxin superfamily. Potassium channel inhibitor family. Alpha-KTx 06 subfamily. In terms of tissue distribution, expressed by the venom gland.

The protein resides in the secreted. In terms of biological role, this toxin reversibly blocks Shaker B potassium-channels (expressed in insect Sf9 cells) with a Kd of 96.6 nM, and presents an even better affinity toward hKv1.3 (KCNA3), blocking it with a Kd of 17.7 nM. In Opisthacanthus cayaporum (South American scorpion), this protein is Potassium channel toxin alpha-KTx 6.17.